A 431-amino-acid chain; its full sequence is 3-phosphoshikimate 1-carboxyvinyltransferase (431 aa).

3-phosphoshikimate is bound by residues Lys26, Ser27, and Arg31. Lys26 is a phosphoenolpyruvate binding site. Phosphoenolpyruvate is bound by residues Gly100 and Arg129. 3-phosphoshikimate is bound by residues Ser175, Ser176, Gln177, Asp308, and Gln335. Gln177 lines the phosphoenolpyruvate pocket. Asp308 serves as the catalytic Proton acceptor. Arg339, Arg381, and Lys412 together coordinate phosphoenolpyruvate.

The protein belongs to the EPSP synthase family. As to quaternary structure, monomer.

Its subcellular location is the cytoplasm. The enzyme catalyses 3-phosphoshikimate + phosphoenolpyruvate = 5-O-(1-carboxyvinyl)-3-phosphoshikimate + phosphate. It participates in metabolic intermediate biosynthesis; chorismate biosynthesis; chorismate from D-erythrose 4-phosphate and phosphoenolpyruvate: step 6/7. Catalyzes the transfer of the enolpyruvyl moiety of phosphoenolpyruvate (PEP) to the 5-hydroxyl of shikimate-3-phosphate (S3P) to produce enolpyruvyl shikimate-3-phosphate and inorganic phosphate. The chain is 3-phosphoshikimate 1-carboxyvinyltransferase from Opitutus terrae (strain DSM 11246 / JCM 15787 / PB90-1).